The sequence spans 178 residues: Long polar fimbria protein A (178 aa).

The N-terminal stretch at 1-24 (MEFLMKKVVFALSALAVVSTSAFA) is a signal peptide.

It belongs to the fimbrial protein family.

It localises to the fimbrium. This is Long polar fimbria protein A (lpfA) from Salmonella typhimurium (strain LT2 / SGSC1412 / ATCC 700720).